The following is a 515-amino-acid chain: Maturase K (515 aa).

The protein belongs to the intron maturase 2 family. MatK subfamily.

The protein resides in the plastid. The protein localises to the chloroplast. Its function is as follows. Usually encoded in the trnK tRNA gene intron. Probably assists in splicing its own and other chloroplast group II introns. This chain is Maturase K, found in Pinus banksiana (Jack pine).